The sequence spans 317 residues: Acetyl-coenzyme A carboxylase carboxyl transferase subunit alpha (317 aa).

The CoA carboxyltransferase C-terminal domain maps to 33-294 (NLDDEITRLQ…KKRLLADLAD (262 aa)).

It belongs to the AccA family. Acetyl-CoA carboxylase is a heterohexamer composed of biotin carboxyl carrier protein (AccB), biotin carboxylase (AccC) and two subunits each of ACCase subunit alpha (AccA) and ACCase subunit beta (AccD).

It is found in the cytoplasm. It catalyses the reaction N(6)-carboxybiotinyl-L-lysyl-[protein] + acetyl-CoA = N(6)-biotinyl-L-lysyl-[protein] + malonyl-CoA. It participates in lipid metabolism; malonyl-CoA biosynthesis; malonyl-CoA from acetyl-CoA: step 1/1. Its function is as follows. Component of the acetyl coenzyme A carboxylase (ACC) complex. First, biotin carboxylase catalyzes the carboxylation of biotin on its carrier protein (BCCP) and then the CO(2) group is transferred by the carboxyltransferase to acetyl-CoA to form malonyl-CoA. This is Acetyl-coenzyme A carboxylase carboxyl transferase subunit alpha from Histophilus somni (strain 129Pt) (Haemophilus somnus).